A 264-amino-acid polypeptide reads, in one-letter code: Glyceraldehyde-3-phosphate dehydrogenase (264 aa).

The NAD(+) site is built by arginine 45 and threonine 93. Residues 123-125 (SCT) and threonine 154 contribute to the D-glyceraldehyde 3-phosphate site. The active-site Nucleophile is the cysteine 124. Residue asparagine 155 participates in NAD(+) binding. Residues arginine 169, 182–183 (TG), and arginine 205 contribute to the D-glyceraldehyde 3-phosphate site. Positions 245-264 (GILGYTEDPXVSSDXKGNSH) are disordered.

This sequence belongs to the glyceraldehyde-3-phosphate dehydrogenase family. Homotetramer.

Its subcellular location is the cytoplasm. The catalysed reaction is D-glyceraldehyde 3-phosphate + phosphate + NAD(+) = (2R)-3-phospho-glyceroyl phosphate + NADH + H(+). The protein operates within carbohydrate degradation; glycolysis; pyruvate from D-glyceraldehyde 3-phosphate: step 1/5. Its function is as follows. Catalyzes the oxidative phosphorylation of glyceraldehyde 3-phosphate (G3P) to 1,3-bisphosphoglycerate (BPG) using the cofactor NAD. The first reaction step involves the formation of a hemiacetal intermediate between G3P and a cysteine residue, and this hemiacetal intermediate is then oxidized to a thioester, with concomitant reduction of NAD to NADH. The reduced NADH is then exchanged with the second NAD, and the thioester is attacked by a nucleophilic inorganic phosphate to produce BPG. The sequence is that of Glyceraldehyde-3-phosphate dehydrogenase (gap) from Borrelia hermsii.